The chain runs to 460 residues: Orexin receptor type 2 (460 aa).

Over 1–54 the chain is Extracellular; sequence MSSTKLEDSLPRRNWSSASELNETQEPFLNPTDYDDEEFLRYLWREYLHPKEYE. Asn14 and Asn22 each carry an N-linked (GlcNAc...) asparagine glycan. Positions 33-49 are required for response to orexin-A; sequence DYDDEEFLRYLWREYLH. A helical transmembrane segment spans residues 55-75; that stretch reads WVLIAGYIIVFVVALIGNVLV. The Cytoplasmic portion of the chain corresponds to 76–88; sequence CVAVWKNHHMRTV. The helical transmembrane segment at 89 to 110 threads the bilayer; it reads TNYFIVNLSLADVLVTITCLPA. The Extracellular portion of the chain corresponds to 111–127; the sequence is TLVVDITETWFFGQSLC. Residues Cys127 and Cys210 are joined by a disulfide bond. The chain crosses the membrane as a helical span at residues 128 to 150; the sequence is KVIPYLQTVSVSVSVLTLSCIAL. At 151–170 the chain is on the cytoplasmic side; the sequence is DRWYAICHPLMFKSTAKRAR. Residues 171-191 form a helical membrane-spanning segment; it reads NSIVVIWIVSCIIMIPQAIVM. Over 192-222 the chain is Extracellular; the sequence is ERSSMLPGLANKTTLFTVCDERWGGEVYPKM. A glycan (N-linked (GlcNAc...) asparagine) is linked at Asn202. Residues 223 to 243 traverse the membrane as a helical segment; sequence YHICFFLVTYMAPLCLMVLAY. The Cytoplasmic segment spans residues 244–304; it reads LQIFRKLWCR…QIRARRKTAR (61 aa). A helical membrane pass occupies residues 305–326; the sequence is MLMVVLLVFAICYLPISILNVL. Over 327–342 the chain is Extracellular; that stretch reads KRVFGMFTHTEDRETV. The chain crosses the membrane as a helical span at residues 343–366; it reads YAWFTFSHWLVYANSAANPIIYNF. The Cytoplasmic portion of the chain corresponds to 367–460; that stretch reads LSGKFREEFK…SSLLSTWLEV (94 aa).

It belongs to the G-protein coupled receptor 1 family. As to expression, expressed in the brain in the cerebral cortex, septal nuclei, hippocampus, medial thalamic groups, dorsal and median raphe nuclei, and many hypothalamic nuclei including the tuberomammillary nucleus, dorsomedial hypothalamus, paraventricular hypothalamic nucleus, and ventral premammillary nucleus. Not detected in the spleen, lung, liver, skeletal muscle, kidney and testis. Orexin receptor mRNA expression has also been reported in the adrenal gland, enteric nervous system, and pancreas.

It is found in the cell membrane. In terms of biological role, nonselective, high-affinity receptor for both orexin-A and orexin-B neuropeptides. Triggers an increase in cytoplasmic Ca(2+) levels in response to orexin-A binding. The sequence is that of Orexin receptor type 2 (Hcrtr2) from Rattus norvegicus (Rat).